The sequence spans 209 residues: MARNLDPKCRQCRREGEKLFLKGEKCFTDKCAIERRAYAPGQHGQKSGARLSGYGVQLREKQKIRRIYGVLEGQFRLTYKRADSRKGVTGENLLSMLESRLDSVCYRMGFGASRTEARQIVRHNGIVVNGRRVNIPSYQVRPGDVVEVAEKSKAQLRIKAAADATATRGYPEWIEVDAKALKGTYKAHPQRSELPSTINESLVVELYSK.

The 61-residue stretch at 99–159 folds into the S4 RNA-binding domain; the sequence is SRLDSVCYRM…EKSKAQLRIK (61 aa).

This sequence belongs to the universal ribosomal protein uS4 family. As to quaternary structure, part of the 30S ribosomal subunit. Contacts protein S5. The interaction surface between S4 and S5 is involved in control of translational fidelity.

In terms of biological role, one of the primary rRNA binding proteins, it binds directly to 16S rRNA where it nucleates assembly of the body of the 30S subunit. Functionally, with S5 and S12 plays an important role in translational accuracy. The sequence is that of Small ribosomal subunit protein uS4 from Thiobacillus denitrificans (strain ATCC 25259 / T1).